The chain runs to 316 residues: Ribosomal RNA small subunit methyltransferase H (316 aa).

Residues 35–37 (GGH), Asp55, Phe79, Asp101, and Gln108 contribute to the S-adenosyl-L-methionine site.

The protein belongs to the methyltransferase superfamily. RsmH family.

It is found in the cytoplasm. It carries out the reaction cytidine(1402) in 16S rRNA + S-adenosyl-L-methionine = N(4)-methylcytidine(1402) in 16S rRNA + S-adenosyl-L-homocysteine + H(+). In terms of biological role, specifically methylates the N4 position of cytidine in position 1402 (C1402) of 16S rRNA. The polypeptide is Ribosomal RNA small subunit methyltransferase H (Vibrio campbellii (strain ATCC BAA-1116)).